An 82-amino-acid polypeptide reads, in one-letter code: Sec-independent protein translocase protein TatA (82 aa).

Residues 1–21 (MGLSTTHLIIFLVIIVLIFGT) form a helical membrane-spanning segment.

It belongs to the TatA/E family. As to quaternary structure, the Tat system comprises two distinct complexes: a TatABC complex, containing multiple copies of TatA, TatB and TatC subunits, and a separate TatA complex, containing only TatA subunits. Substrates initially bind to the TatABC complex, which probably triggers association of the separate TatA complex to form the active translocon.

It is found in the cell inner membrane. In terms of biological role, part of the twin-arginine translocation (Tat) system that transports large folded proteins containing a characteristic twin-arginine motif in their signal peptide across membranes. TatA could form the protein-conducting channel of the Tat system. In Leptothrix cholodnii (strain ATCC 51168 / LMG 8142 / SP-6) (Leptothrix discophora (strain SP-6)), this protein is Sec-independent protein translocase protein TatA.